A 423-amino-acid polypeptide reads, in one-letter code: D-tagatose-1,6-bisphosphate aldolase subunit GatZ (423 aa).

It belongs to the GatZ/KbaZ family. GatZ subfamily. In terms of assembly, forms a complex with GatY.

Its pathway is carbohydrate metabolism; D-tagatose 6-phosphate degradation; D-glyceraldehyde 3-phosphate and glycerone phosphate from D-tagatose 6-phosphate: step 2/2. Its function is as follows. Component of the tagatose-1,6-bisphosphate aldolase GatYZ that is required for full activity and stability of the Y subunit. Could have a chaperone-like function for the proper and stable folding of GatY. When expressed alone, GatZ does not show any aldolase activity. Is involved in the catabolism of galactitol. This is D-tagatose-1,6-bisphosphate aldolase subunit GatZ from Salmonella newport (strain SL254).